The chain runs to 303 residues: Coenzyme PQQ synthesis protein B (303 aa).

Belongs to the PqqB family.

It participates in cofactor biosynthesis; pyrroloquinoline quinone biosynthesis. Functionally, may be involved in the transport of PQQ or its precursor to the periplasm. This is Coenzyme PQQ synthesis protein B from Pseudomonas putida (strain ATCC 700007 / DSM 6899 / JCM 31910 / BCRC 17059 / LMG 24140 / F1).